The chain runs to 183 residues: ATP synthase subunit delta (183 aa).

It belongs to the ATPase delta chain family. As to quaternary structure, F-type ATPases have 2 components, F(1) - the catalytic core - and F(0) - the membrane proton channel. F(1) has five subunits: alpha(3), beta(3), gamma(1), delta(1), epsilon(1). F(0) has three main subunits: a(1), b(2) and c(10-14). The alpha and beta chains form an alternating ring which encloses part of the gamma chain. F(1) is attached to F(0) by a central stalk formed by the gamma and epsilon chains, while a peripheral stalk is formed by the delta and b chains.

It is found in the cell membrane. F(1)F(0) ATP synthase produces ATP from ADP in the presence of a proton or sodium gradient. F-type ATPases consist of two structural domains, F(1) containing the extramembraneous catalytic core and F(0) containing the membrane proton channel, linked together by a central stalk and a peripheral stalk. During catalysis, ATP synthesis in the catalytic domain of F(1) is coupled via a rotary mechanism of the central stalk subunits to proton translocation. Its function is as follows. This protein is part of the stalk that links CF(0) to CF(1). It either transmits conformational changes from CF(0) to CF(1) or is implicated in proton conduction. The sequence is that of ATP synthase subunit delta from Mesoplasma florum (strain ATCC 33453 / NBRC 100688 / NCTC 11704 / L1) (Acholeplasma florum).